The primary structure comprises 150 residues: MFEDPRERPRTLHELCESLNTTLQNLQVQCVYCKETLQWADVYNFAICDLRVVYRDRSPYAACKRCVIFYSKITEYRRYTCSVYGATLEALTKKSLCNLLIRCHRCQMPLGPEEKQRIVDEKRRFHEIAGQWKGLCTNCWRPRRQTETQV.

2 zinc fingers span residues 30-66 (CVYCKETLQWADVYNFAICDLRVVYRDRSPYAACKRC) and 103-139 (CHRCQMPLGPEEKQRIVDEKRRFHEIAGQWKGLCTNC). A PDZ-binding domain motif is present at residues 148 to 150 (TQV).

The protein belongs to the papillomaviridae E6 protein family. Forms homodimers. Interacts with ubiquitin-protein ligase UBE3A/E6-AP and thus forms a complex with human TP53. Interacts with human NFX1 and MAGI3. Interacts with human IRF3; this interaction inhibits the establishment of antiviral state. Interacts with human TYK2; this interaction inhibits JAK-STAT activation by interferon alpha. Interacts with host DLG1; this interaction leads to the proteasomal degradation of DLG1.

It localises to the host cytoplasm. It is found in the host nucleus. In terms of biological role, plays a major role in the induction and maintenance of cellular transformation. Acts mainly as an oncoprotein by stimulating the destruction of many host cell key regulatory proteins. E6 associates with host UBE3A/E6-AP ubiquitin-protein ligase, and inactivates tumor suppressors TP53 and TP73 by targeting them to the 26S proteasome for degradation. In turn, DNA damage and chromosomal instabilities increase and lead to cell proliferation and cancer development. The complex E6/E6AP targets several other substrates to degradation via the proteasome including host DLG1 or NFX1, a repressor of human telomerase reverse transcriptase (hTERT). The resulting increased expression of hTERT prevents the shortening of telomere length leading to cell immortalization. Other cellular targets including BAK1, Fas-associated death domain-containing protein (FADD) and procaspase 8, are degraded by E6/E6AP causing inhibition of apoptosis. E6 also inhibits immune response by interacting with host IRF3 and TYK2. These interactions prevent IRF3 transcriptional activities and inhibit TYK2-mediated JAK-STAT activation by interferon alpha resulting in inhibition of the interferon signaling pathway. The protein is Protein E6 of Human papillomavirus type 26.